The sequence spans 252 residues: Cell division protein ZapD (252 aa).

This sequence belongs to the ZapD family. Interacts with FtsZ.

Its subcellular location is the cytoplasm. In terms of biological role, cell division factor that enhances FtsZ-ring assembly. Directly interacts with FtsZ and promotes bundling of FtsZ protofilaments, with a reduction in FtsZ GTPase activity. The sequence is that of Cell division protein ZapD from Cupriavidus metallidurans (strain ATCC 43123 / DSM 2839 / NBRC 102507 / CH34) (Ralstonia metallidurans).